The sequence spans 654 residues: Periplasmic beta-glucosidase/beta-xylosidase (654 aa).

The first 25 residues, 1–25 (MEKSATRQKALLIALPLLFSPLASA), serve as a signal peptide directing secretion. Residues aspartate 235 and aspartate 360 contribute to the active site.

The protein belongs to the glycosyl hydrolase 3 family.

It localises to the periplasm. It carries out the reaction Hydrolysis of terminal, non-reducing beta-D-glucosyl residues with release of beta-D-glucose.. The catalysed reaction is Hydrolysis of (1-&gt;4)-beta-D-xylans, to remove successive D-xylose residues from the non-reducing termini.. Exhibits both beta-glucosidase and beta-xylosidase activities. The sequence is that of Periplasmic beta-glucosidase/beta-xylosidase (bgxA) from Dickeya chrysanthemi (Pectobacterium chrysanthemi).